Reading from the N-terminus, the 505-residue chain is Catalase (505 aa).

Active-site residues include His-56 and Asn-129. Heme is bound at residue Tyr-339.

This sequence belongs to the catalase family. Heme serves as cofactor.

Its subcellular location is the cytoplasm. The catalysed reaction is 2 H2O2 = O2 + 2 H2O. Functionally, decomposes hydrogen peroxide into water and oxygen; serves to protect cells from the toxic effects of hydrogen peroxide. The sequence is that of Catalase (katA) from Helicobacter pylori (strain J99 / ATCC 700824) (Campylobacter pylori J99).